Here is a 117-residue protein sequence, read N- to C-terminus: UPF0251 protein DET0218 (117 aa).

Belongs to the UPF0251 family.

The sequence is that of UPF0251 protein DET0218 from Dehalococcoides mccartyi (strain ATCC BAA-2266 / KCTC 15142 / 195) (Dehalococcoides ethenogenes (strain 195)).